Reading from the N-terminus, the 369-residue chain is Naringenin,2-oxoglutarate 3-dioxygenase (369 aa).

Residues 193–297 enclose the Fe2OG dioxygenase domain; that stretch reads CVDMDQKVVV…RLSIATFQNP (105 aa). 3 residues coordinate Fe cation: H220, D222, and H278. R288 is a binding site for 2-oxoglutarate.

It belongs to the iron/ascorbate-dependent oxidoreductase family. Fe(2+) is required as a cofactor. The cofactor is L-ascorbate.

It carries out the reaction a (2S)-flavan-4-one + 2-oxoglutarate + O2 = a (2R,3R)-dihydroflavonol + succinate + CO2. It functions in the pathway secondary metabolite biosynthesis; flavonoid biosynthesis. Its function is as follows. Catalyzes the 3-beta-hydroxylation of 2S-flavanones to 2R,3R-dihydroflavonols which are intermediates in the biosynthesis of flavonols, anthocyanidins, catechins and proanthocyanidins in plants. This is Naringenin,2-oxoglutarate 3-dioxygenase (AN3) from Petunia hybrida (Petunia).